The chain runs to 415 residues: L-cysteine:1D-myo-inositol 2-amino-2-deoxy-alpha-D-glucopyranoside ligase (415 aa).

Cys-47 contacts Zn(2+). Residues 47–50, Thr-62, and 85–87 contribute to the L-cysteinyl-5'-AMP site; these read CGIT and NVT. The short motif at 49 to 59 is the 'HIGH' region element; the sequence is ITPYDATHLGH. A 'ERGGDP' region motif is present at residues 190-195; it reads ERGGDP. L-cysteinyl-5'-AMP is bound at residue Trp-230. A Zn(2+)-binding site is contributed by Cys-234. 252 to 254 serves as a coordination point for L-cysteinyl-5'-AMP; it reads GSD. Residue His-259 coordinates Zn(2+). Residue Ile-286 coordinates L-cysteinyl-5'-AMP. The 'KMSKS' region signature appears at 292–296; the sequence is KMSKS.

It belongs to the class-I aminoacyl-tRNA synthetase family. MshC subfamily. As to quaternary structure, monomer. The cofactor is Zn(2+).

The enzyme catalyses 1D-myo-inositol 2-amino-2-deoxy-alpha-D-glucopyranoside + L-cysteine + ATP = 1D-myo-inositol 2-(L-cysteinylamino)-2-deoxy-alpha-D-glucopyranoside + AMP + diphosphate + H(+). Catalyzes the ATP-dependent condensation of GlcN-Ins and L-cysteine to form L-Cys-GlcN-Ins. The protein is L-cysteine:1D-myo-inositol 2-amino-2-deoxy-alpha-D-glucopyranoside ligase (mshC) of Mycolicibacterium paratuberculosis (strain ATCC BAA-968 / K-10) (Mycobacterium paratuberculosis).